An 84-amino-acid chain; its full sequence is Beta-defensin 119 (84 aa).

Residues 1–21 (MKLLYLFLAILLAIEEPVISG) form the signal peptide. 3 disulfide bridges follow: Cys-28–Cys-55, Cys-35–Cys-49, and Cys-39–Cys-56.

It belongs to the beta-defensin family.

It is found in the secreted. Its function is as follows. Has antibacterial activity. The polypeptide is Beta-defensin 119 (DEFB119) (Hylobates lar (Lar gibbon)).